A 117-amino-acid polypeptide reads, in one-letter code: uncharacterized protein (117 aa).

A run of 3 helical transmembrane segments spans residues 32–52 (VSSS…VTVV), 56–76 (VGVA…VTLL), and 87–107 (LSWC…SFFF).

The protein resides in the membrane. This is an uncharacterized protein from Saccharomyces cerevisiae (strain ATCC 204508 / S288c) (Baker's yeast).